The following is a 256-amino-acid chain: Type III pantothenate kinase (256 aa).

D6–V13 is an ATP binding site. Substrate is bound by residues Y101 and G108–R111. D110 serves as the catalytic Proton acceptor. D130 is a K(+) binding site. T133 is a binding site for ATP. Substrate is bound at residue T185.

It belongs to the type III pantothenate kinase family. As to quaternary structure, homodimer. Requires NH4(+) as cofactor. It depends on K(+) as a cofactor.

Its subcellular location is the cytoplasm. The enzyme catalyses (R)-pantothenate + ATP = (R)-4'-phosphopantothenate + ADP + H(+). Its pathway is cofactor biosynthesis; coenzyme A biosynthesis; CoA from (R)-pantothenate: step 1/5. Catalyzes the phosphorylation of pantothenate (Pan), the first step in CoA biosynthesis. This chain is Type III pantothenate kinase, found in Shouchella clausii (strain KSM-K16) (Alkalihalobacillus clausii).